We begin with the raw amino-acid sequence, 473 residues long: H(+)/Cl(-) exchange transporter ClcA (473 aa).

Over 1–32 (MKTDTPSLETPQAARLRRRQLIRQLLERDKTP) the chain is Cytoplasmic. A helical membrane pass occupies residues 33–69 (LAILFMAAVVGTLVGLAAVAFDKGVAWLQNQRMEALV). The Periplasmic portion of the chain corresponds to 70-76 (HTADNYP). Residues 77–100 (LLLTVAFLCSAVLAMFGYFLVRKY) form a helical membrane-spanning segment. The Selectivity filter part_1 signature appears at 106 to 110 (GSGIP). S107 contacts chloride. The helical intramembrane region spans 109–116 (IPEIEGAL). Residues 117-123 (EDQRPVR) lie on the Cytoplasmic side of the membrane. 2 helical membrane-spanning segments follow: residues 124–141 (WWRVLPVKFFGGLGTLGG) and 148–166 (EGPTVQIGGNIGRMVLDIF). A Selectivity filter part_2 motif is present at residues 146-150 (GREGP). The Cytoplasmic portion of the chain corresponds to 167–176 (RLKGDEARHT). Intramembrane regions (helical) lie at residues 177–189 (LLATGAAAGLAAA) and 193–201 (PLAGILFII). At 202–214 (EEMRPQFRYTLIS) the chain is on the cytoplasmic side. Residues 215-232 (IKAVFIGVIMSTIMYRIF) traverse the membrane as a helical segment. The Periplasmic portion of the chain corresponds to 233-252 (NHEVALIDVGKLSDAPLNTL). A helical transmembrane segment spans residues 253–281 (WLYLILGIIFGIFGPIFNKWVLGMQDLLH). The Cytoplasmic segment spans residues 282–287 (RVHGGN). A helical membrane pass occupies residues 288-309 (ITKWVLMGGAIGGLCGLLGFVA). Over 310–329 (PATSGGGFNLIPIATAGNFS) the chain is Periplasmic. A run of 2 helical transmembrane segments spans residues 330–349 (MGMLVFIFVARVITTLLCFS) and 355–376 (GIFAPMLALGTVLGTAFGMVVV). Positions 355 to 359 (GIFAP) match the Selectivity filter part_3 motif. Chloride is bound by residues I356 and F357. Residues 377-386 (ELFPQYHLEA) are Periplasmic-facing. The helical intramembrane region spans 387-401 (GTFAIAGMGALLAAS). Positions 402-404 (IRA) form an intramembrane region, note=Loop between two helices. Residues 405 to 416 (PLTGIILVLEMT) constitute an intramembrane region (helical). Residues 417–421 (DNYQL) constitute an intramembrane region (note=Loop between two helices). The helical transmembrane segment at 422-438 (ILPMIITGLGATLLAQF) threads the bilayer. The Cytoplasmic segment spans residues 439–473 (TGGKPLYSEILARTLAKQEAEQLARSKAASASENT). A chloride-binding site is contributed by Y445.

Belongs to the chloride channel (TC 2.A.49) family. ClcA subfamily. In terms of assembly, homodimer.

The protein localises to the cell inner membrane. The enzyme catalyses 2 chloride(in) + H(+)(out) = 2 chloride(out) + H(+)(in). Functionally, proton-coupled chloride transporter. Functions as antiport system and exchanges two chloride ions for 1 proton. Probably acts as an electrical shunt for an outwardly-directed proton pump that is linked to amino acid decarboxylation, as part of the extreme acid resistance (XAR) response. This Shigella boydii serotype 4 (strain Sb227) protein is H(+)/Cl(-) exchange transporter ClcA.